The chain runs to 393 residues: Protein TsgA (393 aa).

12 consecutive transmembrane segments (helical) span residues 11-31, 51-71, 78-98, 101-121, 134-154, 162-182, 206-226, 245-265, 273-293, 298-318, 332-352, and 361-381; these read WISF…GMVM, FLNA…EIIP, FGFI…SLAL, AAMF…TFLI, LLFT…VAAF, WYWV…LTFG, IGVL…LGFI, ALVS…SFIL, ILTV…TGTQ, WFIL…ITLG, FILT…GPIV, and LLTA…LGFV.

The protein belongs to the major facilitator superfamily. TsgA family.

The protein localises to the cell inner membrane. This is Protein TsgA from Salmonella paratyphi B (strain ATCC BAA-1250 / SPB7).